Consider the following 259-residue polypeptide: MVFRKSLLKLAVFALGACVAFSNANAAEGKLESIKSKGQLIVGVKNDVPHYALLDQATGEIKGFEVDVAKLLAKSILGDDKKIKLVAVNAKTRGPLLDNGSVDAVIATFTITPERKRIYNFSEPYYQDAIGLLVLKEKNYKSLADMKGANIGVAQAATTKKAIGEAAKKIGIDVKFSEFPDYPSIKAALDAKRVDAFSVDKSILLGYVDDKSEILPDSFEPQSYGIVTKKDDPAFAKYVDDFVKEHKNEIDALAKKWGL.

The signal sequence occupies residues 1 to 26 (MVFRKSLLKLAVFALGACVAFSNANA).

It belongs to the bacterial solute-binding protein 3 family.

Its subcellular location is the cell surface. In terms of biological role, common antigen and a major cell adherence molecule. Most probably involved, with PEB1C, in a binding-protein-dependent transport system for an amino acid. May be involved in binding to intestinal cells. In Campylobacter jejuni subsp. jejuni serotype O:23/36 (strain 81-176), this protein is Major cell-binding factor (peb1A).